A 144-amino-acid polypeptide reads, in one-letter code: 3-hydroxyacyl-[acyl-carrier-protein] dehydratase FabZ (144 aa).

The active site involves H48.

The protein belongs to the thioester dehydratase family. FabZ subfamily.

The protein localises to the cytoplasm. It catalyses the reaction a (3R)-hydroxyacyl-[ACP] = a (2E)-enoyl-[ACP] + H2O. Involved in unsaturated fatty acids biosynthesis. Catalyzes the dehydration of short chain beta-hydroxyacyl-ACPs and long chain saturated and unsaturated beta-hydroxyacyl-ACPs. In Listeria monocytogenes serotype 4b (strain CLIP80459), this protein is 3-hydroxyacyl-[acyl-carrier-protein] dehydratase FabZ.